The following is a 520-amino-acid chain: Cytochrome b5 reductase 4 (520 aa).

The residue at position 1 (methionine 1) is an N-acetylmethionine. Low complexity predominate over residues 1-16; it reads MLNVPSQSFPGPSSQQ. Positions 1–27 are disordered; that stretch reads MLNVPSQSFPGPSSQQRVASGGRSKVP. The Cytochrome b5 heme-binding domain maps to 54 to 130; that stretch reads LIEVTEEELK…LKECLVGRMA (77 aa). 2 residues coordinate heme: histidine 89 and histidine 112. In terms of domain architecture, CS spans 164-255; the sequence is PSSPSYDWFQ…KENTSWKCLG (92 aa). The 113-residue stretch at 272-384 folds into the FAD-binding FR-type domain; the sequence is LFYRKCQLVS…SNPEGNFIIS (113 aa). Residues 364-379 and 391-423 contribute to the FAD site; these read DQLQ…NPEG and DLFL…KVKL.

Belongs to the flavoprotein pyridine nucleotide cytochrome reductase family. Requires FAD as cofactor.

The protein localises to the endoplasmic reticulum. It carries out the reaction 2 Fe(III)-[cytochrome b5] + NADH = 2 Fe(II)-[cytochrome b5] + NAD(+) + H(+). NADH-cytochrome b5 reductase involved in endoplasmic reticulum stress response pathway. Plays a critical role in protecting pancreatic beta-cells against oxidant stress, possibly by protecting the cell from excess buildup of reactive oxygen species (ROS). The protein is Cytochrome b5 reductase 4 (CYB5R4) of Bos taurus (Bovine).